The chain runs to 287 residues: Formamidopyrimidine-DNA glycosylase (287 aa).

Pro-2 functions as the Schiff-base intermediate with DNA in the catalytic mechanism. Residue Glu-3 is the Proton donor of the active site. Lys-58 acts as the Proton donor; for beta-elimination activity in catalysis. 3 residues coordinate DNA: His-104, Arg-123, and Arg-166. The segment at 251–287 (RVYDREGQPCPTPGCKGMIGREVQAGRSTFFCPVCQV) adopts an FPG-type zinc-finger fold. Residue Arg-277 is the Proton donor; for delta-elimination activity of the active site.

It belongs to the FPG family. In terms of assembly, monomer. Zn(2+) serves as cofactor.

The catalysed reaction is Hydrolysis of DNA containing ring-opened 7-methylguanine residues, releasing 2,6-diamino-4-hydroxy-5-(N-methyl)formamidopyrimidine.. It carries out the reaction 2'-deoxyribonucleotide-(2'-deoxyribose 5'-phosphate)-2'-deoxyribonucleotide-DNA = a 3'-end 2'-deoxyribonucleotide-(2,3-dehydro-2,3-deoxyribose 5'-phosphate)-DNA + a 5'-end 5'-phospho-2'-deoxyribonucleoside-DNA + H(+). Functionally, involved in base excision repair of DNA damaged by oxidation or by mutagenic agents. Acts as a DNA glycosylase that recognizes and removes damaged bases. Has a preference for oxidized purines, such as 7,8-dihydro-8-oxoguanine (8-oxoG). Has AP (apurinic/apyrimidinic) lyase activity and introduces nicks in the DNA strand. Cleaves the DNA backbone by beta-delta elimination to generate a single-strand break at the site of the removed base with both 3'- and 5'-phosphates. The protein is Formamidopyrimidine-DNA glycosylase of Caulobacter sp. (strain K31).